A 433-amino-acid polypeptide reads, in one-letter code: UDP-N-acetylmuramate--L-alanine ligase (433 aa).

Residue 108–114 (GAHGKTS) coordinates ATP.

The protein belongs to the MurCDEF family.

It is found in the cytoplasm. The enzyme catalyses UDP-N-acetyl-alpha-D-muramate + L-alanine + ATP = UDP-N-acetyl-alpha-D-muramoyl-L-alanine + ADP + phosphate + H(+). It functions in the pathway cell wall biogenesis; peptidoglycan biosynthesis. Functionally, cell wall formation. The polypeptide is UDP-N-acetylmuramate--L-alanine ligase (Anoxybacillus flavithermus (strain DSM 21510 / WK1)).